A 134-amino-acid chain; its full sequence is Large ribosomal subunit protein bL17 (134 aa).

It belongs to the bacterial ribosomal protein bL17 family. As to quaternary structure, part of the 50S ribosomal subunit. Contacts protein L32.

The protein is Large ribosomal subunit protein bL17 of Thioalkalivibrio sulfidiphilus (strain HL-EbGR7).